Consider the following 164-residue polypeptide: uncharacterized protein (164 aa).

2 consecutive CBS domains span residues 9 to 66 (ATTK…DIDS) and 72 to 128 (MTKD…VHTM).

This is an uncharacterized protein from Acidianus ambivalens (Desulfurolobus ambivalens).